The primary structure comprises 456 residues: Bifunctional protein GlmU (456 aa).

The segment at 1–229 (MLNNAMSVVI…LSEVEGVNNR (229 aa)) is pyrophosphorylase. UDP-N-acetyl-alpha-D-glucosamine-binding positions include 11 to 14 (LAAG), K25, Q76, 81 to 82 (GT), 103 to 105 (YGD), G140, E154, N169, and N227. D105 contributes to the Mg(2+) binding site. Position 227 (N227) interacts with Mg(2+). The segment at 230 to 250 (LQLSRLERVYQSEQAEKLLLA) is linker. The N-acetyltransferase stretch occupies residues 251-456 (GVMLRDPARF…EGWRRPVKKK (206 aa)). UDP-N-acetyl-alpha-D-glucosamine is bound by residues R333 and K351. The Proton acceptor role is filled by H363. UDP-N-acetyl-alpha-D-glucosamine-binding residues include Y366 and N377. Residues A380, 386 to 387 (NY), S405, A423, and R440 contribute to the acetyl-CoA site.

The protein in the N-terminal section; belongs to the N-acetylglucosamine-1-phosphate uridyltransferase family. It in the C-terminal section; belongs to the transferase hexapeptide repeat family. As to quaternary structure, homotrimer. Mg(2+) is required as a cofactor.

Its subcellular location is the cytoplasm. It carries out the reaction alpha-D-glucosamine 1-phosphate + acetyl-CoA = N-acetyl-alpha-D-glucosamine 1-phosphate + CoA + H(+). The enzyme catalyses N-acetyl-alpha-D-glucosamine 1-phosphate + UTP + H(+) = UDP-N-acetyl-alpha-D-glucosamine + diphosphate. The protein operates within nucleotide-sugar biosynthesis; UDP-N-acetyl-alpha-D-glucosamine biosynthesis; N-acetyl-alpha-D-glucosamine 1-phosphate from alpha-D-glucosamine 6-phosphate (route II): step 2/2. It functions in the pathway nucleotide-sugar biosynthesis; UDP-N-acetyl-alpha-D-glucosamine biosynthesis; UDP-N-acetyl-alpha-D-glucosamine from N-acetyl-alpha-D-glucosamine 1-phosphate: step 1/1. Its pathway is bacterial outer membrane biogenesis; LPS lipid A biosynthesis. Functionally, catalyzes the last two sequential reactions in the de novo biosynthetic pathway for UDP-N-acetylglucosamine (UDP-GlcNAc). The C-terminal domain catalyzes the transfer of acetyl group from acetyl coenzyme A to glucosamine-1-phosphate (GlcN-1-P) to produce N-acetylglucosamine-1-phosphate (GlcNAc-1-P), which is converted into UDP-GlcNAc by the transfer of uridine 5-monophosphate (from uridine 5-triphosphate), a reaction catalyzed by the N-terminal domain. The polypeptide is Bifunctional protein GlmU (Escherichia coli (strain 55989 / EAEC)).